Consider the following 359-residue polypeptide: Stearoyl-CoA desaturase (359 aa).

The Cytoplasmic segment spans residues 1–72 (MPAHLLQEEI…EGPRPKLEYV (72 aa)). Residues 73-93 (WRNIILMSLLHLGALYGIILI) form a helical membrane-spanning segment. Residue Asn-75 coordinates substrate. The Lumenal portion of the chain corresponds to 94–97 (PTCK). A helical transmembrane segment spans residues 98–118 (IYTLLWAFAYYLLSAVGVTAG). Over 119-217 (AHRLWSHRTY…EKLVMFQRRY (99 aa)) the chain is Cytoplasmic. Residues His-120 and His-125 each coordinate Fe cation. The Histidine box-1 signature appears at 120–125 (HRLWSH). 3 residues coordinate substrate: Asn-148, Arg-155, and Asp-156. Residues His-157, His-160, and His-161 each contribute to the Fe cation site. The Histidine box-2 signature appears at 157 to 161 (HRAHH). The substrate site is built by Arg-188 and Lys-189. Ser-203 is subject to Phosphoserine. The helical transmembrane segment at 218 to 237 (YKPGILLMCFILPTIVPWYC) threads the bilayer. Over 238–241 (WGEA) the chain is Lumenal. Residues 242-263 (FPQSLFVATFLRYAIVLNATWL) traverse the membrane as a helical segment. Residue Trp-262 coordinates substrate. The Cytoplasmic segment spans residues 264–359 (VNSAAHLYGY…RTGDESYKSG (96 aa)). His-269, His-298, His-301, and His-302 together coordinate Fe cation. Positions 298–302 (HNYHH) match the Histidine box-3 motif.

Belongs to the fatty acid desaturase type 1 family. Fe(2+) serves as cofactor.

The protein localises to the endoplasmic reticulum membrane. The catalysed reaction is octadecanoyl-CoA + 2 Fe(II)-[cytochrome b5] + O2 + 2 H(+) = (9Z)-octadecenoyl-CoA + 2 Fe(III)-[cytochrome b5] + 2 H2O. It catalyses the reaction hexadecanoyl-CoA + 2 Fe(II)-[cytochrome b5] + O2 + 2 H(+) = (9Z)-hexadecenoyl-CoA + 2 Fe(III)-[cytochrome b5] + 2 H2O. Functionally, stearoyl-CoA desaturase that utilizes O(2) and electrons from reduced cytochrome b5 to introduce the first double bond into saturated fatty acyl-CoA substrates. Catalyzes the insertion of a cis double bond at the delta-9 position into fatty acyl-CoA substrates including palmitoyl-CoA and stearoyl-CoA. Gives rise to a mixture of 16:1 and 18:1 unsaturated fatty acids. Plays an important role in lipid biosynthesis. Plays an important role in regulating the expression of genes that are involved in lipogenesis and in regulating mitochondrial fatty acid oxidation. Plays an important role in body energy homeostasis. Contributes to the biosynthesis of membrane phospholipids, cholesterol esters and triglycerides. The protein is Stearoyl-CoA desaturase (SCD) of Sus scrofa (Pig).